The chain runs to 176 residues: Disulfide bond formation protein B (176 aa).

At 1–14 (MLRFLNQCSRGRGA) the chain is on the cytoplasmic side. Residues 15–31 (WLLMAFTALALEMVALW) traverse the membrane as a helical segment. Residues 32–49 (FQHVMLLKPCVLCIYERC) are Periplasmic-facing. A disulfide bridge links Cys41 with Cys44. The helical transmembrane segment at 50–65 (ALFGVMGAGLVGAIAP) threads the bilayer. Residues 66–71 (KTPLRY) are Cytoplasmic-facing. A helical membrane pass occupies residues 72 to 89 (VAMVIWIYSAWRGLQLAY). The Periplasmic segment spans residues 90 to 144 (EHTMIQLHPSPFMTCDFMARFPDWLPLGKWLPQVFVASGDCAERQWSFLTLEMPQ). Cys104 and Cys130 are oxidised to a cystine. The chain crosses the membrane as a helical span at residues 145 to 163 (WLLGIFAAYLVVAIAVVIA). Residues 164 to 176 (QAFKPKKRDLFGR) lie on the Cytoplasmic side of the membrane.

This sequence belongs to the DsbB family.

It localises to the cell inner membrane. Required for disulfide bond formation in some periplasmic proteins. Acts by oxidizing the DsbA protein. This chain is Disulfide bond formation protein B, found in Salmonella paratyphi A (strain ATCC 9150 / SARB42).